The chain runs to 349 residues: MGVQEKDPLLQLSLPPGFRFYPTDEELLVQYLCKKVAGHDFPLQIIGEIDLYKFDPWVLPSKATFGEKEWYFFSPRDRKYPNGSRPNRVAGSGYWKATGTDKVITSQGRKVGIKKALVFYVGKAPKGSKTNWIMHEYRLFESSRKNNGSSKLDEWVLCRIYKKNSSGPKPLMSGLHSSNEYSHGSSTSSSSQFDDMLESLPEMDDRFSNLPRLNSLKAEKFNLDRLDSANFDWAILAGLKPMPELGPANQAPGVQGQAQGHVNNHIHSDNNNMNFLNDVYAHPPNFRGNTKVESINLDEEVESGKRNQRIDQSSYFQQSLNGFSQAYTNNVDQFGIQCPNQTLNLGFKQ.

The NAC domain maps to 14–163 (LPPGFRFYPT…EWVLCRIYKK (150 aa)). Residues 111–169 (VGIKKALVFYVGKAPKGSKTNWIMHEYRLFESSRKNNGSSKLDEWVLCRIYKKNSSGPK) mediate DNA binding. The disordered stretch occupies residues 169 to 194 (KPLMSGLHSSNEYSHGSSTSSSSQFD). Positions 177 to 191 (SSNEYSHGSSTSSSS) are enriched in low complexity.

In terms of tissue distribution, expressed in guard cells of the epidermis.

The protein resides in the nucleus. Its function is as follows. Transcription factor involved in abscisic acid-mediated stomatal closure. Regulates the expression of NCED1, a gene involved in the biosynthesis of abscisic acid (ABA). Required for the stomatal closure induced by the bacterial pathogen Pseudomonas syringae pv tomato DC3000, but not for stomatal reopening. This is NAC domain-containing protein JA2 from Solanum lycopersicum (Tomato).